The following is a 260-amino-acid chain: Repetitive secreted protein 1 (260 aa).

Positions 1-20 (MKLSFTIVATAALVASCTFA) are cleaved as a signal peptide.

In terms of processing, rsp1 is processed by the subtilisin-like endoprotease kex2. Cleavage by kex2 generates 11 peptides.

The protein localises to the secreted. Repetitive secreted protein essential for pathogenic development. Hum3 and rsp1 together are pathogenicity proteins that share an essential function in early stages of the infection. This Mycosarcoma maydis (Corn smut fungus) protein is Repetitive secreted protein 1.